A 568-amino-acid polypeptide reads, in one-letter code: Cyclin-dependent kinase-like 2 (568 aa).

Positions 4-289 (YENLGLVGEG…CADLLRHDFF (286 aa)) constitute a Protein kinase domain. Residues 10–18 (VGEGSYGMV) and Lys-33 each bind ATP. The [NKR]KIAxRE signature appears at 45 to 51 (KKIAMRE). Asp-126 (proton acceptor) is an active-site residue. Disordered stretches follow at residues 309–333 (DARNNSLPKKSQNRKKEKDDALGEE) and 545–568 (SHQGAGSPLSDDSEADLPRMEHQH). Positions 322–333 (RKKEKDDALGEE) are enriched in basic and acidic residues.

Belongs to the protein kinase superfamily. CMGC Ser/Thr protein kinase family. CDC2/CDKX subfamily. Expressed in testis, kidney, lung and brain.

It localises to the cytoplasm. The protein resides in the nucleus. The catalysed reaction is L-seryl-[protein] + ATP = O-phospho-L-seryl-[protein] + ADP + H(+). It carries out the reaction L-threonyl-[protein] + ATP = O-phospho-L-threonyl-[protein] + ADP + H(+). This is Cyclin-dependent kinase-like 2 from Mus musculus (Mouse).